Here is a 267-residue protein sequence, read N- to C-terminus: MSGERRLNGLSLKVGPLGEHDRLLTLLSDQEGVTRLAVPGARRPRSSLAAAVPLSLLELQVAGRRGLARVRQLKVLRSFNSVGKQLETLAAAQALAELSLMLVAGNDPLPGLLNTLLMHLERLEALSQAQPAQPNTTLACSVQACVHLLALGGYGLPVQECCRNGTALEPPLGQWEWRCSLMPEEGFAIGALPGAALQLNPSELALLQRLLRPDLPMRRDGELMGPPEVWLRLLAVVECWTRTHLPHHMRALGMLRKAIISSGDGRT.

The protein belongs to the RecO family.

In terms of biological role, involved in DNA repair and RecF pathway recombination. The protein is DNA repair protein RecO of Prochlorococcus marinus (strain MIT 9313).